The following is a 379-amino-acid chain: Cell division protein FtsZ (379 aa).

GTP is bound by residues 18-22 (GGGVN), 105-107 (GTG), E136, R140, and D184.

This sequence belongs to the FtsZ family. As to quaternary structure, homodimer. Polymerizes to form a dynamic ring structure in a strictly GTP-dependent manner. Interacts directly with several other division proteins.

The protein localises to the cytoplasm. In terms of biological role, essential cell division protein that forms a contractile ring structure (Z ring) at the future cell division site. The regulation of the ring assembly controls the timing and the location of cell division. One of the functions of the FtsZ ring is to recruit other cell division proteins to the septum to produce a new cell wall between the dividing cells. Binds GTP and shows GTPase activity. The sequence is that of Cell division protein FtsZ from Mycobacterium leprae (strain TN).